A 523-amino-acid polypeptide reads, in one-letter code: MNRNEISFIYYVKIKLYLYNSFFIMSYIEMVLAIPLLGAIALLFVPSWKTQTIRNIALNSSLLTFLISLLLWIEFDSSSALFQFTDGVCSPNVYSDVTLAKAASSSSFSALNFALGVDGISLFFIILTTLLVPICILVSWNNIEVYVKEYCIAFLVLETLMLTVFSVLDLLLFYIFFESVLIPMFIIIGVWGSRERKIRAAYQFFLYTLFGSVLMLLAILLIYFQTGTLDIEMLYLSDFSETRQCILWLAFFASFAVKVPMVPVHIWLPEAHVEAPTAGSVILAGILLKLGTYGFLRFSIPLFPYACIYFTPLIYTMSVIAIVYTSCTTIRQIDLKKIIAYSSVAHMNFVTIGLFSQNTQGIEGSILLMISHGLVSPALFLCVGVLYDRHKTRLLRYYSGCGQTMPIFALLFVFFTMANISLPGTSSFPGEFLVFIGSYQNNSFVAFCAATGMVLGAAYALWLCNRLIYGVSKPDFINTWSDVNRREFFMFAPLIAGILWIGVYPEPFLDAMHCSCIYLLYAQ.

A run of 14 helical transmembrane segments spans residues 22–42, 62–82, 120–140, 149–169, 170–190, 204–224, 246–266, 276–296, 303–323, 338–358, 366–386, 404–424, 444–464, and 488–508; these read FFIM…AIAL, LLTF…SALF, ISLF…LVSW, EYCI…SVLD, LLLF…IIGV, FFLY…LIYF, ILWL…PVHI, PTAG…YGFL, FPYA…IAIV, IIAY…FSQN, ILLM…VGVL, TMPI…SLPG, FVAF…LWLC, and FFMF…PEPF.

This sequence belongs to the complex I subunit 4 family.

The protein resides in the mitochondrion membrane. The catalysed reaction is a ubiquinone + NADH + 5 H(+)(in) = a ubiquinol + NAD(+) + 4 H(+)(out). Core subunit of the mitochondrial membrane respiratory chain NADH dehydrogenase (Complex I) that is believed to belong to the minimal assembly required for catalysis. Complex I functions in the transfer of electrons from NADH to the respiratory chain. The immediate electron acceptor for the enzyme is believed to be ubiquinone. This Prototheca wickerhamii protein is NADH-ubiquinone oxidoreductase chain 4 (ND4).